A 119-amino-acid chain; its full sequence is HTH-type transcriptional regulator SarX (119 aa).

The H-T-H motif DNA-binding region spans 55–78 (LKTAMDELDLSRTKLLVSIRRLIE).

This sequence belongs to the SarA family.

Its subcellular location is the cytoplasm. Functionally, involved in the regulation of virulence genes. Acts as a repressor of the agr locus and consequently targets genes regulated by the agr system such as sspA, hla and hlb. Binds directly to the agr promoter region. The protein is HTH-type transcriptional regulator SarX (sarX) of Staphylococcus aureus (strain USA300).